Here is a 400-residue protein sequence, read N- to C-terminus: Aspartate aminotransferase (400 aa).

Residues Gly-42 and Asn-180 each coordinate L-aspartate. Position 241 is an N6-(pyridoxal phosphate)lysine (Lys-241). Arg-373 contacts L-aspartate.

Belongs to the class-I pyridoxal-phosphate-dependent aminotransferase family. In terms of assembly, homodimer. Pyridoxal 5'-phosphate serves as cofactor.

It localises to the cytoplasm. It catalyses the reaction L-aspartate + 2-oxoglutarate = oxaloacetate + L-glutamate. In Sulfolobus acidocaldarius (strain ATCC 33909 / DSM 639 / JCM 8929 / NBRC 15157 / NCIMB 11770), this protein is Aspartate aminotransferase (aspC).